Reading from the N-terminus, the 287-residue chain is MRLIVVSGHSGAGKSVALRVLEDLGYYCVDNLPVNLLDAFVQSVSESKQNVAVSIDIRNIPKKLKELNTTLEKLKAELDVTVLFLDANKETLLTRYSETRRIHPLSLDSQSLSLDQAIELEQEILMPLKAHADLVLNSSGQSLHDLSETVRMRVEGRERKDLVMVFESFGFKYGLPSDADYVFDVRFLPNPHWEPALRPLTGLDGPIGAFLEQHQSVLDLKYQIESFIETWLPLLEKNNRSYLTVAIGCTGGKHRSVYLTQKIGEFFADKGHQVQIRHTSLEKNVKE.

8 to 15 (GHSGAGKS) is a binding site for ATP. Position 56–59 (56–59 (DIRN)) interacts with GTP.

It belongs to the RapZ-like family.

In terms of biological role, displays ATPase and GTPase activities. This chain is Nucleotide-binding protein VIBHAR_03667, found in Vibrio campbellii (strain ATCC BAA-1116).